A 407-amino-acid polypeptide reads, in one-letter code: 1-deoxy-D-xylulose 5-phosphate reductoisomerase (407 aa).

6 residues coordinate NADPH: Thr25, Gly26, Ser27, Ile28, Asn53, and Asn136. Lys137 lines the 1-deoxy-D-xylulose 5-phosphate pocket. Residue Glu138 coordinates NADPH. Asp162 lines the Mn(2+) pocket. Positions 163, 164, 188, and 211 each coordinate 1-deoxy-D-xylulose 5-phosphate. Glu164 lines the Mn(2+) pocket. Gly217 contacts NADPH. Residues Ser224, Asn229, Lys230, and Glu233 each contribute to the 1-deoxy-D-xylulose 5-phosphate site. Glu233 is a Mn(2+) binding site.

Belongs to the DXR family. Mg(2+) serves as cofactor. The cofactor is Mn(2+).

The catalysed reaction is 2-C-methyl-D-erythritol 4-phosphate + NADP(+) = 1-deoxy-D-xylulose 5-phosphate + NADPH + H(+). The protein operates within isoprenoid biosynthesis; isopentenyl diphosphate biosynthesis via DXP pathway; isopentenyl diphosphate from 1-deoxy-D-xylulose 5-phosphate: step 1/6. In terms of biological role, catalyzes the NADPH-dependent rearrangement and reduction of 1-deoxy-D-xylulose-5-phosphate (DXP) to 2-C-methyl-D-erythritol 4-phosphate (MEP). This is 1-deoxy-D-xylulose 5-phosphate reductoisomerase from Afipia carboxidovorans (strain ATCC 49405 / DSM 1227 / KCTC 32145 / OM5) (Oligotropha carboxidovorans).